The primary structure comprises 144 residues: Large ribosomal subunit protein uL15 (144 aa).

The interval 1–51 (MKLNELKPATGSRSKRLRKGRGLSSGHGFTSGRGTKGQKAHGKTRLGFEGG) is disordered. Gly residues predominate over residues 23 to 35 (LSSGHGFTSGRGT).

Belongs to the universal ribosomal protein uL15 family. As to quaternary structure, part of the 50S ribosomal subunit.

In terms of biological role, binds to the 23S rRNA. The chain is Large ribosomal subunit protein uL15 from Limosilactobacillus reuteri (strain DSM 20016) (Lactobacillus reuteri).